Reading from the N-terminus, the 858-residue chain is MAAKGAHGSYLKVESELERCRAEGHWDRMPELVRQLQTLSMPGGGGNRRGSPSAAFTFPDTDDFGKLLLAEALLEQCLKENHAKIKDSMPLLEKNEPKMSEAKNYLSSILNHGRLSPQYMCEAMLILGKLHYVEGSYRDAISMYARAGIDDMSMENKPLYQMRLLSEAFVIKGLSLERLPNSIASRFRLTEREEEVITCFERASWIAQVFLQELEKTTNNSTSRHLKGCHPLDYELTYFLEAALQSAYVKNLKKGNIVKGMRELREVLRTVETKATQNFKVMAAKHLAGVLLHSLSEECYWSPLSHPLPEFMGKEESSFATQALRKPHLYEGDNLYCPKDNIEEALLLLLISESMATRDVVLSRVPEQEEDRTVSLQNAAAIYDLLSITLGRRGQYVMLSECLERAMKFAFGEFHLWYQVALSMVACGKSAYAVSLLRECVKLRPSDPTVPLMAAKVCIGSLRWLEEAEHFAMMVISLGEEAGEFLPKGYLALGLTYSLQATDATLKSKQDELHRKALQTLERAQQLAPSDPQVILYVSLQLALVRQISSAMEQLQEALKVRKDDAHALHLLALLFSAQKHHQHALDVVNMAITEHPENFNLMFTKVKLEQVLKGPEEALVTCRQVLRLWQTLYSFSQLGGLEKDGSFGEGLTMKKQSGMHLTLPDAHDADSGSRRASSIAASRLEEAMSELTMPSSVLKQGPMQLWTTLEQIWLQAAELFMEQQHLKEAGFCIQEAAGLFPTSHSVLYMRGRLAEVKGNLEEAKQLYKEALTVNPDGVRIMHSLGLMLSRLGHKSLAQKVLRDAVERQSTCHEAWQGLGEVLQAQGQNEAAVDCFLTALELEASSPVLPFSIIPREL.

S51 bears the Phosphoserine mark. TPR repeat units follow at residues 121 to 157, 177 to 210, 414 to 447, 497 to 531, 533 to 565, and 566 to 599; these read CEAM…MENK, ERLP…AQVF, FHLW…RPSD, YSLQ…APSD, QVIL…RKDD, and AHAL…HPEN. S182 carries the post-translational modification Phosphoserine. Residues S647, S678, S679, and S690 each carry the phosphoserine modification. Phosphothreonine is present on T693. 3 TPR repeats span residues 745–778, 780–812, and 813–846; these read HSVL…NPDG, RIMH…QSTC, and HEAW…EASS.

In terms of assembly, component of a phosphatidylinositol 4-kinase (PI4K) complex, composed of PI4KA, EFR3 (EFR3A or EFR3B), TTC7 (TTC7A or TTC7B) and HYCC (HYCC1 or HYCC2). Interacts with PI4KA. Interaction with PI4KA is direct. Interacts with EFR3 (EFR3A or EFR3B), interaction is direct. Interacts with HYCC (HYCC1 or HYCC2), interaction is direct. Association with the PI4K complex is strongly reduced by TMEM150A. Expressed in epithelial cells of the intestine, thymus, and pancreas (at protein level).

The protein resides in the cytoplasm. The protein localises to the cell membrane. Functionally, component of a complex required to localize phosphatidylinositol 4-kinase (PI4K) to the plasma membrane. The complex acts as a regulator of phosphatidylinositol 4-phosphate (PtdIns(4)P) synthesis. In the complex, plays a central role in bridging PI4KA to EFR3B and HYCC1, via direct interactions. This is Tetratricopeptide repeat protein 7A from Homo sapiens (Human).